Here is a 164-residue protein sequence, read N- to C-terminus: Endoribonuclease YbeY (164 aa).

Residues H117, H121, and H127 each coordinate Zn(2+).

It belongs to the endoribonuclease YbeY family. Zn(2+) serves as cofactor.

It localises to the cytoplasm. Functionally, single strand-specific metallo-endoribonuclease involved in late-stage 70S ribosome quality control and in maturation of the 3' terminus of the 16S rRNA. The sequence is that of Endoribonuclease YbeY from Mycoplasma capricolum subsp. capricolum (strain California kid / ATCC 27343 / NCTC 10154).